The sequence spans 717 residues: Transport/processing ATP-binding protein ComA (717 aa).

In terms of domain architecture, Peptidase C39 spans Gln-11–Met-138. Cys-17 is an active-site residue. 7 consecutive transmembrane segments (helical) span residues Gly-18–Leu-38, Gly-166–Ser-186, Leu-205–Ala-225, Leu-237–Phe-257, Ser-281–Phe-301, Asn-306–Met-326, and Val-397–Gly-417. The ABC transmembrane type-1 domain maps to Ile-168 to Thr-450. Residues Met-484 to Ser-717 form the ABC transporter domain. Gly-517–Thr-524 is an ATP binding site.

The protein belongs to the ABC transporter superfamily. HlyB family.

It localises to the cell membrane. Functionally, required for induction of competence. Seems to transport the competence-stimulating peptide (CSP). The polypeptide is Transport/processing ATP-binding protein ComA (comA) (Streptococcus pneumoniae (strain ATCC BAA-255 / R6)).